Consider the following 93-residue polypeptide: Pyrimidine/purine nucleoside phosphorylase (93 aa).

The protein belongs to the nucleoside phosphorylase PpnP family.

The enzyme catalyses a purine D-ribonucleoside + phosphate = a purine nucleobase + alpha-D-ribose 1-phosphate. It catalyses the reaction adenosine + phosphate = alpha-D-ribose 1-phosphate + adenine. The catalysed reaction is cytidine + phosphate = cytosine + alpha-D-ribose 1-phosphate. It carries out the reaction guanosine + phosphate = alpha-D-ribose 1-phosphate + guanine. The enzyme catalyses inosine + phosphate = alpha-D-ribose 1-phosphate + hypoxanthine. It catalyses the reaction thymidine + phosphate = 2-deoxy-alpha-D-ribose 1-phosphate + thymine. The catalysed reaction is uridine + phosphate = alpha-D-ribose 1-phosphate + uracil. It carries out the reaction xanthosine + phosphate = alpha-D-ribose 1-phosphate + xanthine. Catalyzes the phosphorolysis of diverse nucleosides, yielding D-ribose 1-phosphate and the respective free bases. Can use uridine, adenosine, guanosine, cytidine, thymidine, inosine and xanthosine as substrates. Also catalyzes the reverse reactions. The protein is Pyrimidine/purine nucleoside phosphorylase of Shewanella pealeana (strain ATCC 700345 / ANG-SQ1).